The primary structure comprises 59 residues: Large ribosomal subunit protein bL32 (59 aa).

Residues 1–20 (MAVPKKKTSKGKRNQRHATW) are compositionally biased toward basic residues. The segment at 1–22 (MAVPKKKTSKGKRNQRHATWKG) is disordered.

This sequence belongs to the bacterial ribosomal protein bL32 family.

This chain is Large ribosomal subunit protein bL32, found in Prochlorococcus marinus (strain NATL1A).